A 71-amino-acid polypeptide reads, in one-letter code: Cell division protein ZapB (71 aa).

Positions 5–67 form a coiled coil; the sequence is LEVLEQLESK…RALLGKMEQM (63 aa).

Belongs to the ZapB family. As to quaternary structure, homodimer. The ends of the coiled-coil dimer bind to each other, forming polymers. Interacts with FtsZ.

The protein resides in the cytoplasm. Its function is as follows. Non-essential, abundant cell division factor that is required for proper Z-ring formation. It is recruited early to the divisome by direct interaction with FtsZ, stimulating Z-ring assembly and thereby promoting cell division earlier in the cell cycle. Its recruitment to the Z-ring requires functional FtsA or ZipA. In Aeromonas salmonicida (strain A449), this protein is Cell division protein ZapB.